Consider the following 233-residue polypeptide: Orotidine 5'-phosphate decarboxylase (233 aa).

Residues Asp9, Lys31, 58 to 67, Thr120, Arg182, Gln191, Gly211, and Arg212 contribute to the substrate site; that span reads DLKLHDIPNT. The active-site Proton donor is the Lys60.

The protein belongs to the OMP decarboxylase family. Type 1 subfamily. Homodimer.

The catalysed reaction is orotidine 5'-phosphate + H(+) = UMP + CO2. It participates in pyrimidine metabolism; UMP biosynthesis via de novo pathway; UMP from orotate: step 2/2. Its function is as follows. Catalyzes the decarboxylation of orotidine 5'-monophosphate (OMP) to uridine 5'-monophosphate (UMP). The chain is Orotidine 5'-phosphate decarboxylase from Listeria welshimeri serovar 6b (strain ATCC 35897 / DSM 20650 / CCUG 15529 / CIP 8149 / NCTC 11857 / SLCC 5334 / V8).